Consider the following 91-residue polypeptide: Non-specific lipid-transfer protein 1 (91 aa).

4 disulfides stabilise this stretch: cysteine 4-cysteine 51, cysteine 14-cysteine 28, cysteine 29-cysteine 74, and cysteine 49-cysteine 88.

In terms of tissue distribution, expressed in seeds (at protein level).

In terms of biological role, plant non-specific lipid-transfer proteins transfer phospholipids as well as galactolipids across membranes. May play a role in wax or cutin deposition in the cell walls of expanding epidermal cells and certain secretory tissues. Binds to both saturated and unsaturated lipids, with the highest binding efficiency for linoleic acid, followed by linolenic acid. The protein is Non-specific lipid-transfer protein 1 of Foeniculum vulgare (Fennel).